The chain runs to 172 residues: Stellate protein CG33237 (172 aa).

It belongs to the casein kinase 2 subunit beta family. In terms of assembly, interacts in vitro with the casein kinase 2 alpha subunit (CkII-alpha). The relevance of such interaction is however unclear in vivo. In terms of tissue distribution, probably not expressed in wild-type flies. In males lacking the Y chromosome, it is testis-specific and constitutes the main component of star-shaped crystals.

Functionally, unknown. In males lacking the Y chromosome, its strong overexpression leads to the appearance of proteinaceous star-shaped crystals in the primary spermatocytes causing meiotic drive, possibly by interfering with normal casein kinase 2 activity. The protein is Stellate protein CG33237 (Ste:CG33237) of Drosophila melanogaster (Fruit fly).